The sequence spans 237 residues: Phosphoribosylaminoimidazole-succinocarboxamide synthase (237 aa).

Belongs to the SAICAR synthetase family.

It catalyses the reaction 5-amino-1-(5-phospho-D-ribosyl)imidazole-4-carboxylate + L-aspartate + ATP = (2S)-2-[5-amino-1-(5-phospho-beta-D-ribosyl)imidazole-4-carboxamido]succinate + ADP + phosphate + 2 H(+). It participates in purine metabolism; IMP biosynthesis via de novo pathway; 5-amino-1-(5-phospho-D-ribosyl)imidazole-4-carboxamide from 5-amino-1-(5-phospho-D-ribosyl)imidazole-4-carboxylate: step 1/2. In Serratia proteamaculans (strain 568), this protein is Phosphoribosylaminoimidazole-succinocarboxamide synthase.